Here is a 100-residue protein sequence, read N- to C-terminus: Large ribosomal subunit protein uL23c (100 aa).

The protein belongs to the universal ribosomal protein uL23 family. As to quaternary structure, part of the 50S ribosomal subunit.

Its subcellular location is the plastid. It localises to the chloroplast. In terms of biological role, binds to 23S rRNA. In Euglena gracilis, this protein is Large ribosomal subunit protein uL23c (rpl23).